Consider the following 415-residue polypeptide: Casein kinase 1-like protein 3 (415 aa).

Residues 9–277 (YKLGRKIGGG…FLKRLFRDLF (269 aa)) enclose the Protein kinase domain. Residues 15–23 (IGGGSFGEI) and Lys-38 contribute to the ATP site. Asp-128 serves as the catalytic Proton acceptor. Composition is skewed to polar residues over residues 303–314 (NQSQAVPGSSNP) and 373–415 (NMPS…SPEK). 2 disordered regions span residues 303-330 (NQSQAVPGSSNPRAMPVDTSNHRGGPNI) and 344-415 (NAIG…SPEK).

Belongs to the protein kinase superfamily. CK1 Ser/Thr protein kinase family. Casein kinase I subfamily. Slightly autophosphorylated. In terms of tissue distribution, expressed in seedlings, stems, leaves and flowers.

The protein localises to the cytoplasm. Its subcellular location is the nucleus. It catalyses the reaction L-seryl-[protein] + ATP = O-phospho-L-seryl-[protein] + ADP + H(+). It carries out the reaction L-threonyl-[protein] + ATP = O-phospho-L-threonyl-[protein] + ADP + H(+). Functionally, protein kinase involved in blue light responses (e.g. hypocotyl elongation and flowering) by phosphorylating CRY2 to reduce its stability. In Arabidopsis thaliana (Mouse-ear cress), this protein is Casein kinase 1-like protein 3.